The primary structure comprises 1381 residues: Major capsid protein (1381 aa).

This sequence belongs to the herpesviridae major capsid protein family. As to quaternary structure, homomultimer. Makes the hexons and eleven out of twelve pentons. Interacts with triplex proteins 1/TRX1 and 2/TRX2; adjacent capsomers are linked together in groups of three by triplexes, heterotrimeric complexes composed of one molecule of TRX1 and two molecules of TRX2. Interacts with scaffold protein; this interaction allows efficient MCP transport to the host nucleus. Interacts with capsid vertex component 2/CVC2. Interacts with the small capsomere-interacting protein/SCP.

The protein localises to the virion. It is found in the host nucleus. In terms of biological role, self-assembles to form an icosahedral capsid with a T=16 symmetry, about 200 nm in diameter, and consisting of 150 hexons and 12 pentons (total of 162 capsomers). Hexons form the edges and faces of the capsid and are each composed of six MCP molecules. In contrast, one penton is found at each of the 12 vertices. Eleven of the pentons are MCP pentamers, while the last vertex is occupied by the portal complex. The capsid is surrounded by a layer of proteinaceous material designated the tegument which, in turn, is enclosed in an envelope of host cell-derived lipids containing virus-encoded glycoproteins. This is Major capsid protein from Epstein-Barr virus (strain AG876) (HHV-4).